Consider the following 67-residue polypeptide: Large ribosomal subunit protein uL29 (67 aa).

The protein belongs to the universal ribosomal protein uL29 family.

This is Large ribosomal subunit protein uL29 from Desulfitobacterium hafniense (strain Y51).